Reading from the N-terminus, the 211-residue chain is tRNA (guanine-N(7)-)-methyltransferase (211 aa).

Residues Glu-37, Asp-62, Glu-89, and Asp-112 each contribute to the S-adenosyl-L-methionine site. Residue Asp-112 is part of the active site. Substrate is bound by residues Lys-116 and Asp-148.

This sequence belongs to the class I-like SAM-binding methyltransferase superfamily. TrmB family.

It carries out the reaction guanosine(46) in tRNA + S-adenosyl-L-methionine = N(7)-methylguanosine(46) in tRNA + S-adenosyl-L-homocysteine. It functions in the pathway tRNA modification; N(7)-methylguanine-tRNA biosynthesis. In terms of biological role, catalyzes the formation of N(7)-methylguanine at position 46 (m7G46) in tRNA. The chain is tRNA (guanine-N(7)-)-methyltransferase from Geobacter metallireducens (strain ATCC 53774 / DSM 7210 / GS-15).